A 101-amino-acid polypeptide reads, in one-letter code: Small ribosomal subunit protein uS10 (101 aa).

The protein belongs to the universal ribosomal protein uS10 family. As to quaternary structure, part of the 30S ribosomal subunit.

Functionally, involved in the binding of tRNA to the ribosomes. The polypeptide is Small ribosomal subunit protein uS10 (Flavobacterium psychrophilum (strain ATCC 49511 / DSM 21280 / CIP 103535 / JIP02/86)).